A 262-amino-acid polypeptide reads, in one-letter code: Zinc import ATP-binding protein ZnuC (262 aa).

One can recognise an ABC transporter domain in the interval 5–220 (VSLEQLCVEF…PSYIALFGNA (216 aa)). 37–44 (GPNGAGKS) is an ATP binding site. The tract at residues 236–262 (HHDLSGSPVSGDATSCSNHNHGHHHHD) is disordered.

Belongs to the ABC transporter superfamily. Zinc importer (TC 3.A.1.15.5) family. The complex is composed of two ATP-binding proteins (ZnuC), two transmembrane proteins (ZnuB) and a solute-binding protein (ZnuA).

Its subcellular location is the cell inner membrane. The catalysed reaction is Zn(2+)(out) + ATP(in) + H2O(in) = Zn(2+)(in) + ADP(in) + phosphate(in) + H(+)(in). Part of the ABC transporter complex ZnuABC involved in zinc import. Responsible for energy coupling to the transport system. The protein is Zinc import ATP-binding protein ZnuC of Vibrio parahaemolyticus serotype O3:K6 (strain RIMD 2210633).